Consider the following 90-residue polypeptide: U7-theraphotoxin-Hhn1a 5 (90 aa).

A signal peptide spans 1 to 19; that stretch reads MKTAIFTVVLALAVFAVLS. The propeptide occupies 20–50; sequence FGWEANEKALSEESTELIHEKEAASETEARE. Disulfide bonds link Cys-51-Cys-65, Cys-58-Cys-70, and Cys-64-Cys-81.

This sequence belongs to the neurotoxin 10 (Hwtx-1) family. 13 (Hntx-13) subfamily. As to expression, expressed by the venom gland.

It localises to the secreted. Functionally, ion channel inhibitor. The polypeptide is U7-theraphotoxin-Hhn1a 5 (Cyriopagopus hainanus (Chinese bird spider)).